The chain runs to 118 residues: Non-specific lipid-transfer protein D (118 aa).

An N-terminal signal peptide occupies residues M1–A25. 4 disulfide bridges follow: C29–C77, C39–C54, C55–C100, and C75–C114.

This sequence belongs to the plant LTP family.

In terms of biological role, plant non-specific lipid-transfer proteins transfer phospholipids as well as galactolipids across membranes. May play a role in wax or cutin deposition in the cell walls of expanding epidermal cells and certain secretory tissues. The protein is Non-specific lipid-transfer protein D (WAX9D) of Brassica oleracea var. italica (Broccoli).